A 933-amino-acid chain; its full sequence is Progesterone receptor (933 aa).

An AF3; mediates transcriptional activation region spans residues 1 to 164; the sequence is MTELKAKGPR…PATQGVLSPL (164 aa). A disordered region spans residues 1 to 256; the sequence is MTELKAKGPR…AAAGGGAAAV (256 aa). The segment at 1 to 566 is modulating, Pro-Rich; sequence MTELKAKGPR…YSFESLPQKI (566 aa). S20 carries the phosphoserine modification. The LXXL motif 1 motif lies at 55-59; that stretch reads LDGLL. A Phosphoserine modification is found at S81. Positions 115–119 match the LXXL motif 2 motif; sequence LETLL. 2 positions are modified to phosphoserine: S130 and S162. The mediates transcriptional transrepression stretch occupies residues 165-305; sequence MSRSGGKAGD…LATTVMDFIH (141 aa). The short motif at 183-187 is the Nuclear localization signal element; sequence KVLPR. Phosphoserine is present on residues S190 and S213. A compositionally biased stretch (acidic residues) spans 220–231; it reads EVEEEDGSESEE. Over residues 232–246 the composition is skewed to low complexity; it reads SAGPLLKGKPRALGG. The residue at position 294 (S294) is a Phosphoserine; by MAPK1. A disordered region spans residues 331-378; sequence GGAGAASAFAPPRSSPSASSTPVAVGDFPDCAYPPDAEPKDDAYPLYS. The span at 335–350 shows a compositional bias: low complexity; the sequence is AASAFAPPRSSPSASS. S345 carries the post-translational modification Phosphoserine; by MAPK. K388 is covalently cross-linked (Glycyl lysine isopeptide (Lys-Gly) (interchain with G-Cter in SUMO); alternate). K388 is covalently cross-linked (Glycyl lysine isopeptide (Lys-Gly) (interchain with G-Cter in ubiquitin); alternate). S400 is subject to Phosphoserine; by CDK2. The tract at residues 415-452 is disordered; the sequence is PDFPLGPPPPLPPRAPPSRPGEAAVTAAPASASVSSAS. A compositionally biased stretch (pro residues) spans 418-433; it reads PLGPPPPLPPRAPPSR. A compositionally biased stretch (low complexity) spans 434-452; it reads PGEAAVTAAPASASVSSAS. Residues 456–546 are AF1; mediates transcriptional activation; sequence STLECILYKA…VYPPYLNYLR (91 aa). K531 is covalently cross-linked (Glycyl lysine isopeptide (Lys-Gly) (interchain with G-Cter in SUMO)). 2 consecutive NR C4-type zinc fingers follow at residues 567-587 and 603-627; these read CLIC…CGSC and CAGR…LRKC. Residues 567-639 constitute a DNA-binding region (nuclear receptor); it reads CLICGDEASG…AGMVLGGRKF (73 aa). S676 carries the phosphoserine modification. Positions 679–913 constitute an NR LBD domain; the sequence is QDIQLIPPLI…EFPEMMSEVI (235 aa). Residues 687–933 form an AF2; mediates transcriptional activation region; sequence LINLLMSIEP…MVKPLLFHKK (247 aa). R766 contributes to the progesterone binding site.

Belongs to the nuclear hormone receptor family. As to quaternary structure, interacts with SMARD1 and UNC45A. Interacts with CUEDC2; the interaction promotes ubiquitination, decreases sumoylation, and represses transcriptional activity. Interacts with PIAS3; the interaction promotes sumoylation of PR in a hormone-dependent manner, inhibits DNA-binding, and alters nuclear export. Interacts with SP1; the interaction requires ligand-induced phosphorylation on Ser-345 by ERK1/2-MAPK. Interacts with PRMT2. Interacts with NCOA2 and NCOA1. Interacts with KLF9. Interacts with GTF2B. Post-translationally, phosphorylated on multiple serine sites. Several of these sites are hormone-dependent. Phosphorylation on Ser-294 is highly hormone-dependent and modulates ubiquitination and sumoylation on Lys-388. Phosphorylation on Ser-102 and Ser-345 also requires induction by hormone. Basal phosphorylation on Ser-81, Ser-162, Ser-190 and Ser-400 is increased in response to progesterone and can be phosphorylated in vitro by the CDK2-A1 complex. Increased levels of phosphorylation on Ser-400 also in the presence of EGF, heregulin, IGF, PMA and FBS. Phosphorylation at this site by CDK2 is ligand-independent, and increases nuclear translocation and transcriptional activity. Phosphorylation at Ser-162 and Ser-294, but not at Ser-190, is impaired during the G(2)/M phase of the cell cycle. Phosphorylation on Ser-345 by ERK1/2 MAPK is required for interaction with SP1. Sumoylation is hormone-dependent and represses transcriptional activity. Sumoylation on all three sites is enhanced by PIAS3. Desumoylated by SENP1. Sumoylation on Lys-388, the main site of sumoylation, is repressed by ubiquitination on the same site, and modulated by phosphorylation at Ser-294. In terms of processing, ubiquitination is hormone-dependent and represses sumoylation on the same site. Promoted by MAPK-mediated phosphorylation on Ser-294. Ubiquitinated by UBR5, leading to its degradation: UBR5 specifically recognizes and binds ligand-bound PGR when it is not associated with coactivators (NCOAs). In presence of NCOAs, the UBR5-degron is not accessible, preventing its ubiquitination and degradation. Post-translationally, palmitoylated by ZDHHC7 and ZDHHC21. Palmitoylation is required for plasma membrane targeting and for rapid intracellular signaling via ERK and AKT kinases and cAMP generation.

It is found in the nucleus. The protein localises to the cytoplasm. Its function is as follows. The steroid hormones and their receptors are involved in the regulation of eukaryotic gene expression and affect cellular proliferation and differentiation in target tissues. Transcriptional activator of several progesteron-dependent promoters in a variety of cell types. Involved in activation of SRC-dependent MAPK signaling on hormone stimulation. In Gorilla gorilla gorilla (Western lowland gorilla), this protein is Progesterone receptor (PGR).